We begin with the raw amino-acid sequence, 610 residues long: Zinc metalloproteinase-disintegrin-like brevilysin H6 (610 aa).

The signal sequence occupies residues 1–20 (MIQVLLVTICLAAFPYQGSS). The propeptide occupies 21–191 (IILESGNVND…ASQLNLTPEQ (171 aa)). Pyrrolidone carboxylic acid is present on Gln-192. The 197-residue stretch at 198-394 (RFVELVLVAD…HNPECIVNEP (197 aa)) folds into the Peptidase M12B domain. Positions 201 and 285 each coordinate Ca(2+). Intrachain disulfides connect Cys-309–Cys-389, Cys-349–Cys-373, Cys-351–Cys-356, and Cys-373–Cys-378. His-334 is a binding site for Zn(2+). The active site involves Glu-335. Zn(2+)-binding residues include His-338 and His-344. An N-linked (GlcNAc...) asparagine glycan is attached at Asn-372. The Ca(2+) site is built by Cys-389, Asn-392, Val-404, Asn-407, Leu-409, Glu-411, Glu-414, and Asp-417. One can recognise a Disintegrin domain in the interval 402–488 (PPVCGNELLE…ECPADVFHKN (87 aa)). Cystine bridges form between Cys-405/Cys-424, Cys-405/Cys-434, Cys-416/Cys-429, Cys-416/Cys-434, Cys-418/Cys-424, Cys-428/Cys-451, Cys-442/Cys-448, Cys-447/Cys-473, Cys-460/Cys-480, Cys-467/Cys-492, Cys-467/Cys-499, Cys-492/Cys-504, Cys-499/Cys-504, Cys-511/Cys-526, Cys-511/Cys-561, Cys-526/Cys-572, Cys-539/Cys-549, Cys-549/Cys-556, Cys-556/Cys-598, Cys-561/Cys-572, Cys-592/Cys-603, and Cys-598/Cys-603. Residues 466–468 (ECD) carry the D/ECD-tripeptide motif. Asp-468, Pro-469, Glu-471, Asp-483, and Val-484 together coordinate Ca(2+).

This sequence belongs to the venom metalloproteinase (M12B) family. P-III subfamily. P-IIIb sub-subfamily. As to quaternary structure, monomer. It depends on Zn(2+) as a cofactor. In the absence of calcium ions, is autocatalytically degraded giving 29 (p29K) and 45 kDa (p45K) fragments. In presence of calcium ions, the p45K is not detected. In terms of tissue distribution, expressed by the venom gland.

The protein resides in the secreted. Inhibited by chelating agents. Calcium ions enhance its activity, they also suppress autoproteolysis, and contribute to the stability of the enzyme against pH, heating, urea and cysteine. In terms of biological role, shows weak hemorrhagic activity. Rapidly degrades the alpha-chain of fibrinogen (FGA). In Gloydius brevicauda (Korean slamosa snake), this protein is Zinc metalloproteinase-disintegrin-like brevilysin H6.